The primary structure comprises 250 residues: LOB domain-containing protein 37 (250 aa).

One can recognise an LOB domain in the interval 1–107 (MSCNGCRVLR…VETVLRGGSL (107 aa)). The tract at residues 145–227 (DSTDRNIYHH…DSGTTTTTTA (83 aa)) is disordered. Residues 157 to 170 (FSSSRSRSTMDSSS) are compositionally biased toward low complexity.

It belongs to the LOB domain-containing protein family. As to expression, expressed in young shoots, roots, stems, leaves and flowers.

The chain is LOB domain-containing protein 37 (LBD37) from Arabidopsis thaliana (Mouse-ear cress).